Reading from the N-terminus, the 288-residue chain is Acetylglutamate kinase (288 aa).

Substrate is bound by residues 66–67 (GG), R88, and N182.

It belongs to the acetylglutamate kinase family. ArgB subfamily.

It is found in the cytoplasm. It catalyses the reaction N-acetyl-L-glutamate + ATP = N-acetyl-L-glutamyl 5-phosphate + ADP. It participates in amino-acid biosynthesis; L-arginine biosynthesis; N(2)-acetyl-L-ornithine from L-glutamate: step 2/4. In terms of biological role, catalyzes the ATP-dependent phosphorylation of N-acetyl-L-glutamate. The polypeptide is Acetylglutamate kinase (Brachyspira hyodysenteriae (strain ATCC 49526 / WA1)).